A 465-amino-acid chain; its full sequence is Lactaldehyde dehydrogenase (465 aa).

NAD(+) is bound at residue 220-225 (GSVEIG). Residues glutamate 240 and cysteine 274 contribute to the active site.

The protein belongs to the aldehyde dehydrogenase family. Homotetramer.

The enzyme catalyses (S)-lactaldehyde + NAD(+) + H2O = (S)-lactate + NADH + 2 H(+). The protein operates within cofactor biosynthesis; coenzyme F420 biosynthesis. In terms of biological role, involved in F420 biosynthesis through the oxidation of lactaldehyde to lactate. The chain is Lactaldehyde dehydrogenase from Methanococcus maripaludis (strain C7 / ATCC BAA-1331).